Reading from the N-terminus, the 736-residue chain is Catalase-peroxidase 2 (736 aa).

The tryptophyl-tyrosyl-methioninium (Trp-Tyr) (with M-253) cross-link spans 91 to 227 (WHSAGTYRMG…LAAVQMGLIY (137 aa)). His92 acts as the Proton acceptor in catalysis. Positions 227–253 (YVNPEGPDGNPDPVAAAYDIREVFGRM) form a cross-link, tryptophyl-tyrosyl-methioninium (Tyr-Met) (with W-91). Residue His268 participates in heme b binding.

Belongs to the peroxidase family. Peroxidase/catalase subfamily. Homodimer or homotetramer. It depends on heme b as a cofactor. Post-translationally, formation of the three residue Trp-Tyr-Met cross-link is important for the catalase, but not the peroxidase activity of the enzyme.

It carries out the reaction H2O2 + AH2 = A + 2 H2O. The catalysed reaction is 2 H2O2 = O2 + 2 H2O. In terms of biological role, bifunctional enzyme with both catalase and broad-spectrum peroxidase activity. Shows peroxidase specificity towards odianisidine, ABTS and pyrogallol, but methoxyphenol and 2-chloronaphthol are not peroxidized. This Burkholderia cenocepacia (strain ATCC BAA-245 / DSM 16553 / LMG 16656 / NCTC 13227 / J2315 / CF5610) (Burkholderia cepacia (strain J2315)) protein is Catalase-peroxidase 2.